A 213-amino-acid polypeptide reads, in one-letter code: Redox-sensing transcriptional repressor Rex (213 aa).

Positions Leu-18–Phe-57 form a DNA-binding region, H-T-H motif. Gly-92–Gly-97 lines the NAD(+) pocket.

This sequence belongs to the transcriptional regulatory Rex family. In terms of assembly, homodimer.

The protein localises to the cytoplasm. In terms of biological role, modulates transcription in response to changes in cellular NADH/NAD(+) redox state. Binds to the promoter of the aldehyde-alcohol dehydrogenase adhE gene. Functions as a redox-dependent repressor of adhE expression. This is Redox-sensing transcriptional repressor Rex from Streptococcus pneumoniae (strain ATCC BAA-255 / R6).